Consider the following 406-residue polypeptide: MANVLDTLMERGYIKQFTHEAETRELLEKEKVTFYIGFDPTADSLHVGHFIAMMFMAHMQKAGHRPIALIGGGTATIGDPSGKTDMRKMMTNETIAHNVACIKKQMEKFIDFSDDKAILVNNADWLLNQNYVEFLREVGVHFSVNRMLSAECFKQRLERGLSFLEFNYMLMQGYDFYVLNKKYNCKMELGGDDQWSNMIAGVELVRKKSQESAYAMTCTLLTNSEGQKMGKTVNGALWLDPEKTSPYEFYQYWRNVNDADVEKCLKLLTFIPMDEVRRLSSLEGSQINEAKKVLAFEVTKLVHGEEEATKAKQAAEALFGKGGDMSNVPTYEMGKDKLGSELLDILVEAEIVPSKAEGKRLVKQGGLSLNGEKVADFKKTLEEADFENGEVLIKRGKKNYNKIVLA.

Tyr35 is a binding site for L-tyrosine. The short motif at Pro40–His49 is the 'HIGH' region element. 2 residues coordinate L-tyrosine: Tyr168 and Gln172. Positions Lys228–Thr232 match the 'KMSKS' region motif. Position 231 (Lys231) interacts with ATP. Positions Ser340–Val404 constitute an S4 RNA-binding domain.

This sequence belongs to the class-I aminoacyl-tRNA synthetase family. TyrS type 1 subfamily. In terms of assembly, homodimer.

It localises to the cytoplasm. It catalyses the reaction tRNA(Tyr) + L-tyrosine + ATP = L-tyrosyl-tRNA(Tyr) + AMP + diphosphate + H(+). Catalyzes the attachment of tyrosine to tRNA(Tyr) in a two-step reaction: tyrosine is first activated by ATP to form Tyr-AMP and then transferred to the acceptor end of tRNA(Tyr). The chain is Tyrosine--tRNA ligase from Clostridium perfringens (strain ATCC 13124 / DSM 756 / JCM 1290 / NCIMB 6125 / NCTC 8237 / Type A).